We begin with the raw amino-acid sequence, 108 residues long: uncharacterized protein (108 aa).

The protein belongs to the baculoviridae 11 kDa protein family.

This is an uncharacterized protein from Orgyia pseudotsugata (Douglas-fir tussock moth).